The following is a 1165-amino-acid chain: DNA-directed RNA polymerase subunit beta (1165 aa).

Belongs to the RNA polymerase beta chain family. As to quaternary structure, the RNAP catalytic core consists of 2 alpha, 1 beta, 1 beta' and 1 omega subunit. When a sigma factor is associated with the core the holoenzyme is formed, which can initiate transcription.

The enzyme catalyses RNA(n) + a ribonucleoside 5'-triphosphate = RNA(n+1) + diphosphate. Its function is as follows. DNA-dependent RNA polymerase catalyzes the transcription of DNA into RNA using the four ribonucleoside triphosphates as substrates. This chain is DNA-directed RNA polymerase subunit beta, found in Leifsonia xyli subsp. xyli (strain CTCB07).